The following is a 101-amino-acid chain: Small ribosomal subunit protein uS10 (101 aa).

The protein belongs to the universal ribosomal protein uS10 family. As to quaternary structure, part of the 30S ribosomal subunit.

Its function is as follows. Involved in the binding of tRNA to the ribosomes. This Corynebacterium jeikeium (strain K411) protein is Small ribosomal subunit protein uS10.